Reading from the N-terminus, the 147-residue chain is Calcium-regulated heat stable protein 1 (147 aa).

Residues Met1–Pro12 show a composition bias toward pro residues. A disordered region spans residues Met1–Arg49. Ser2 is subject to N-acetylserine. Phosphoserine is present on residues Ser30, Ser32, and Ser41. Residue Thr45 is modified to Phosphothreonine. Phosphoserine is present on residues Ser52 and Ser58. One can recognise a CSD domain in the interval Val62–Thr129. Ser146 and Ser147 each carry phosphoserine.

Homodimer. Interacts with STYX. Post-translationally, can be phosphorylated by DYRK2 (in vitro). Dephosphorylated by calcineurin in a Ca(2+) dependent manner, and probably by PP2A or PP4 serine phosphatases in cAMP- and PKC-mediated pathways. Widely expressed.

The protein resides in the cytoplasm. It localises to the P-body. It is found in the cytoplasmic granule. Binds mRNA and regulates the stability of target mRNA. This chain is Calcium-regulated heat stable protein 1 (Carhsp1), found in Rattus norvegicus (Rat).